The following is a 280-amino-acid chain: Large ribosomal subunit protein uL2 (280 aa).

Disordered stretches follow at residues 1–47 (MAIR…NVHG) and 224–280 (VVMN…SKKR). The segment covering 23–33 (EITRSTPEKSL) has biased composition (basic and acidic residues). A compositionally biased stretch (basic residues) spans 37–47 (LPKKGGRNVHG). Residues 258–268 (RNPNRYSNNMI) are compositionally biased toward polar residues. A compositionally biased stretch (basic residues) spans 270–280 (QRRRTNKSKKR).

Belongs to the universal ribosomal protein uL2 family. In terms of assembly, part of the 50S ribosomal subunit. Forms a bridge to the 30S subunit in the 70S ribosome.

Its function is as follows. One of the primary rRNA binding proteins. Required for association of the 30S and 50S subunits to form the 70S ribosome, for tRNA binding and peptide bond formation. It has been suggested to have peptidyltransferase activity; this is somewhat controversial. Makes several contacts with the 16S rRNA in the 70S ribosome. This is Large ribosomal subunit protein uL2 from Corynebacterium diphtheriae (strain ATCC 700971 / NCTC 13129 / Biotype gravis).